We begin with the raw amino-acid sequence, 368 residues long: MASKTAADHFNRDSFVLAIDAMGGDHAPEIVVEGMAIAAERHPDARFLLVGDETLLAPLLARWPRAASVCTVRHAPVKVTGEMKAAAALRLRDSSMRIAIDAVAHGEASGVVSAGNSGALLALAKIILKTLPGIDRPALAAIMPSARGDILMLDLGANVLCDPRNLVEFAIMGDVFARSVLGLTAPRIGLLNVGSEEQKGDDRIRTAAEMLRTSHLAQQFHGFVEGHDIAGGTTDVVVADGFSGNIALKTAEGTAKMLGGLLKQIFTSTILARLGYLLARGGLERLREWLDPRRYNGAVLVGLNGVVVKSHGGTDAQGFAHAVDVGMDMVSNRSSDRIREGIAKLVELSGAAHPARDKDGTAQLAEAR.

The protein belongs to the PlsX family. In terms of assembly, homodimer. Probably interacts with PlsY.

The protein resides in the cytoplasm. The catalysed reaction is a fatty acyl-[ACP] + phosphate = an acyl phosphate + holo-[ACP]. Its pathway is lipid metabolism; phospholipid metabolism. In terms of biological role, catalyzes the reversible formation of acyl-phosphate (acyl-PO(4)) from acyl-[acyl-carrier-protein] (acyl-ACP). This enzyme utilizes acyl-ACP as fatty acyl donor, but not acyl-CoA. This Granulibacter bethesdensis (strain ATCC BAA-1260 / CGDNIH1) protein is Phosphate acyltransferase.